The sequence spans 75 residues: Serine rich endogenous peptide 4 (75 aa).

The first 31 residues, 1 to 31 (MATKTSNLGHLLLSLFILLLFILSQVGVAQA), serve as a signal peptide directing secretion. Residues 51–75 (PPPLRGIVKPPIASFHSASPKDKGP) are disordered. Positions 61–75 (PIASFHSASPKDKGP) match the SCOOP motif motif. The SxS motif essential for MIK2 binding motif lies at 67 to 69 (SAS).

This sequence belongs to the serine rich endogenous peptide (SCOOP) phytocytokine family. Interacts with MIK2 (via extracellular leucine-rich repeat domain); this interaction triggers the formation of complex between MIK2 and the BAK1/SERK3 and SERK4 coreceptors, and subsequent BAK1 activation by phosphorylation. In terms of tissue distribution, mostly expressed in leaves and seedlings shoots, and, to a lower extent, in roots, stems, siliques, seeds and flowers.

The protein resides in the cell membrane. It localises to the secreted. The protein localises to the extracellular space. It is found in the apoplast. Functionally, brassicaceae-specific phytocytokine (plant endogenous peptide released into the apoplast) perceived by MIK2 in a BAK1/SERK3 and SERK4 coreceptors-dependent manner, that modulates various physiological and antimicrobial processes including growth prevention and reactive oxygen species (ROS) response regulation. Inhibits root growth. Prevents general growth and development. Exhibits antibacterial effects against Pseudomonas syringae pv. tomato DC3000, Ralstonia solanacearum, Bacillus subtilis and Agrobacterium tumefaciens, thus being an antimicrobial peptide (AMP). The sequence is that of Serine rich endogenous peptide 4 from Arabidopsis thaliana (Mouse-ear cress).